The primary structure comprises 378 residues: Chaperone protein DnaJ (378 aa).

The 65-residue stretch at 3-67 (DFYDTLGVNR…EKRARYDQFG (65 aa)) folds into the J domain. The segment at 132–214 (GQEREIKIPH…CGGQGVKQVR (83 aa)) adopts a CR-type zinc-finger fold. Cys145, Cys148, Cys162, Cys165, Cys188, Cys191, Cys202, and Cys205 together coordinate Zn(2+). 4 CXXCXGXG motif repeats span residues 145-152 (CDVCRGTG), 162-169 (CSTCGGAG), 188-195 (CPTCSGSG), and 202-209 (CQSCGGQG).

The protein belongs to the DnaJ family. As to quaternary structure, homodimer. It depends on Zn(2+) as a cofactor.

Its subcellular location is the cytoplasm. Its function is as follows. Participates actively in the response to hyperosmotic and heat shock by preventing the aggregation of stress-denatured proteins and by disaggregating proteins, also in an autonomous, DnaK-independent fashion. Unfolded proteins bind initially to DnaJ; upon interaction with the DnaJ-bound protein, DnaK hydrolyzes its bound ATP, resulting in the formation of a stable complex. GrpE releases ADP from DnaK; ATP binding to DnaK triggers the release of the substrate protein, thus completing the reaction cycle. Several rounds of ATP-dependent interactions between DnaJ, DnaK and GrpE are required for fully efficient folding. Also involved, together with DnaK and GrpE, in the DNA replication of plasmids through activation of initiation proteins. The sequence is that of Chaperone protein DnaJ from Prochlorococcus marinus (strain SARG / CCMP1375 / SS120).